A 690-amino-acid polypeptide reads, in one-letter code: DNA topoisomerase 1 (690 aa).

Residues 3 to 121 (DYLVIVESPA…EITKQAIKDA (119 aa)) form the Toprim domain. Glu-9 and Asp-82 together coordinate Mg(2+). Residues 129-558 (NMDLVDAQQA…DFYKGFEERL (430 aa)) form the Topo IA-type catalytic domain. Positions 163-168 (SAGRVQ) are interaction with DNA. The active-site O-(5'-phospho-DNA)-tyrosine intermediate is Tyr-298. Residues 329–354 (NGTKAVKKDKKSQDAHEAIRPTSVER) form a disordered region. The segment covering 339 to 354 (KSQDAHEAIRPTSVER) has biased composition (basic and acidic residues). 3 consecutive C4-type zinc fingers follow at residues 579–605 (CEKCGHEMVYKMGRYGKFMACSNFPDC), 619–647 (CPKCEKGEIVERKSKKRRVFYGCNQYPEC), and 660–683 (CPKCSSYLVEKRTKKQVQVQCSSC).

This sequence belongs to the type IA topoisomerase family. Monomer. Requires Mg(2+) as cofactor.

It catalyses the reaction ATP-independent breakage of single-stranded DNA, followed by passage and rejoining.. Releases the supercoiling and torsional tension of DNA, which is introduced during the DNA replication and transcription, by transiently cleaving and rejoining one strand of the DNA duplex. Introduces a single-strand break via transesterification at a target site in duplex DNA. The scissile phosphodiester is attacked by the catalytic tyrosine of the enzyme, resulting in the formation of a DNA-(5'-phosphotyrosyl)-enzyme intermediate and the expulsion of a 3'-OH DNA strand. The free DNA strand then undergoes passage around the unbroken strand, thus removing DNA supercoils. Finally, in the religation step, the DNA 3'-OH attacks the covalent intermediate to expel the active-site tyrosine and restore the DNA phosphodiester backbone. This chain is DNA topoisomerase 1, found in Halalkalibacterium halodurans (strain ATCC BAA-125 / DSM 18197 / FERM 7344 / JCM 9153 / C-125) (Bacillus halodurans).